Here is a 244-residue protein sequence, read N- to C-terminus: Signal recognition particle receptor subunit beta (244 aa).

A helical transmembrane segment spans residues 7–23; it reads IIACLLVIGTTIALIAV. Residues 45-53, 66-69, Gly90, and 154-157 each bind GTP; these read GPQNSGKTS, TVVS, and NKSE.

Belongs to the SRP receptor beta subunit family. As to quaternary structure, heterodimer of an alpha and a beta chain.

It localises to the endoplasmic reticulum membrane. In terms of biological role, component of the signal recognition particle (SRP) complex receptor (SR). Ensures, in conjunction with the SRP complex, the correct targeting of the nascent secretory proteins to the endoplasmic reticulum membrane system. May mediate the membrane association of SR. This chain is Signal recognition particle receptor subunit beta (SRP102), found in Saccharomyces cerevisiae (strain ATCC 204508 / S288c) (Baker's yeast).